A 556-amino-acid chain; its full sequence is MSVSAFNRRWAAVILEALTRHGVRHICIAPGSRSTPLTLAAAENSTFIHHTHFDERGLGHLALGLAKVSKQPVAVIVTSGTAVANLYPALIEAGLTGEKLILLTADRPPELIDCGANQAIRQPGMFASHPTHSISLPRPTRDIPARWLVSTIDHALGTLHAGGVHINCPFAEPLYGEMDDTGLSWQQRLGDWWQDDKPWLREAPRLESEKQRDWFFWRQKRGVVVAGRMSAEEGKKVALWAQTLGWPLIGDVLSQTGQPLPCADLWLGNAKATSELQQAQIVVQLGSSLTGKRLLQWQASCEPEEYWIVDDIEGRLDPAHHRGRRLIANIADWLELHPAEKRQPWCVEIPRLAEQAMQAVIARRDAFGEAQLAHRICDYLPEQGQLFVGNSLVVRLIDALSQLPAGYPVYSNRGASGIDGLLSTAAGVQRASGKPTLAIVGDLSALYDLNALALLRQVSAPLVLIVVNNNGGQIFSLLPTPQSERERFYLMPQNVHFEHAAAMFELKYHRPQNWQELETAFADAWRTPTTTVIEMVVNDTDGAQTLQQLLAQVSHL.

This sequence belongs to the TPP enzyme family. MenD subfamily. In terms of assembly, homodimer. It depends on Mg(2+) as a cofactor. The cofactor is Mn(2+). Requires thiamine diphosphate as cofactor.

The enzyme catalyses isochorismate + 2-oxoglutarate + H(+) = 5-enolpyruvoyl-6-hydroxy-2-succinyl-cyclohex-3-ene-1-carboxylate + CO2. It functions in the pathway quinol/quinone metabolism; 1,4-dihydroxy-2-naphthoate biosynthesis; 1,4-dihydroxy-2-naphthoate from chorismate: step 2/7. The protein operates within quinol/quinone metabolism; menaquinone biosynthesis. Its function is as follows. Catalyzes the thiamine diphosphate-dependent decarboxylation of 2-oxoglutarate and the subsequent addition of the resulting succinic semialdehyde-thiamine pyrophosphate anion to isochorismate to yield 2-succinyl-5-enolpyruvyl-6-hydroxy-3-cyclohexene-1-carboxylate (SEPHCHC). The protein is 2-succinyl-5-enolpyruvyl-6-hydroxy-3-cyclohexene-1-carboxylate synthase of Escherichia coli (strain 55989 / EAEC).